Here is a 438-residue protein sequence, read N- to C-terminus: MPRKFLGEKIDRNTDFLRPSSLTLTADDLKVIPDFKCDDDDAVLSGNKTGKRLSRKFGGTMRLKQRLESVPELFLHDFRKRRGQKLQERNNDEQISRAKLPPHLSGLRRPNGLPARKPLRTITEVLPPVTSYNNSIEQNEDDLYYVEKKDPKEHVVETNHKEMRPLDKPLIEKVENVYLEPLIFPVQVSEPVNQMSIPMEELQKYGKSDSEILFDEIISAYEPHMETTGDVSNVLNSEILSVLDRVSNAPKKNWNLMAPKVISAEAIEENKRLSINSIASSGRTPESTRNSRFCENLSSPEYSTAASVSDRWSSGDEFSDVASSNPNSHAISHDGSYTTALGSIPSLAGSVDNLDILDQKDILSPTVSNEIITVKPVPQNTVETMHVTKIVIKPQLFLDWESEEEDDPIDALSRQVDNIEIASVYSGSSSVYSDHFAT.

It localises to the bud neck. In terms of biological role, may be involved in the establishment of the daughter fate. The sequence is that of Protein DSE3 (DSE3) from Candida glabrata (strain ATCC 2001 / BCRC 20586 / JCM 3761 / NBRC 0622 / NRRL Y-65 / CBS 138) (Yeast).